A 562-amino-acid polypeptide reads, in one-letter code: Putative transport protein ECA2683 (562 aa).

The next 6 membrane-spanning stretches (helical) occupy residues 8–28 (LLNG…LCLG), 32–52 (LGPV…LLGQ), 66–86 (FMLF…SIFF), 93–113 (FMLA…LGKL), 116–136 (WGIG…PVLV), and 158–178 (HLSL…IFGA). RCK C-terminal domains are found at residues 202–288 (LDVD…NFRD) and 290–373 (KEVF…RIGF). Helical transmembrane passes span 383–403 (LLAF…TIQF), 406–426 (FTFG…LGFL), 447–467 (FGLM…INSS), 478–498 (SGLI…AYVL), and 537–557 (GTYA…VVIW).

This sequence belongs to the AAE transporter (TC 2.A.81) family. YbjL subfamily.

The protein localises to the cell membrane. The sequence is that of Putative transport protein ECA2683 from Pectobacterium atrosepticum (strain SCRI 1043 / ATCC BAA-672) (Erwinia carotovora subsp. atroseptica).